A 1555-amino-acid chain; its full sequence is Probable serine/threonine-protein kinase DDB_G0276181 (1555 aa).

Disordered regions lie at residues 1–54 (MTSV…NNSF), 138–208 (IIQQ…NSKL), 342–452 (KLKK…DSPF), 486–508 (TTTTTTTTTAPTTTNTNTNIKPL), and 781–850 (NNIN…NQNT). Composition is skewed to low complexity over residues 14-53 (NNSGGSDGNIKNNNNNNNNNNNNNNNNNNSNSGNNSNNNS), 138-205 (IIQQ…NNNN), 359-378 (SNIANSANKINNKNNDKING), and 395-431 (NNSQSSSSSVSPTTVSPSVSPLSSSPTKPPIILSKKP). The region spanning 58 to 238 (QVLHTGYLTK…WIEMIKLAIS (181 aa)) is the PH domain. A compositionally biased stretch (polar residues) spans 437–452 (RNISTSDNGSGTDSPF). Low complexity-rich tracts occupy residues 486 to 504 (TTTTTTTTTAPTTTNTNTN) and 781 to 832 (NNIN…NNNN). Positions 833–850 (GSGLLSSSPLITISNQNT) are enriched in polar residues. In terms of domain architecture, Protein kinase spans 986-1309 (VVLHERLGTG…TIIHSISKMI (324 aa)). An ATP-binding site is contributed by 992–1000 (LGTGATGDI). The disordered stretch occupies residues 1012–1031 (RHISNQDSSGSNSSGSGSGH). Lysine 1061 contributes to the ATP binding site. The active-site Proton acceptor is the aspartate 1156. The span at 1340-1376 (VQNNNNNSNNNNNNNNNNNNNNSNSNLNNCNNSSPNL) shows a compositional bias: low complexity. Disordered stretches follow at residues 1340–1383 (VQNN…SANN) and 1457–1480 (KKSSLEVHSKHKSKRFSYDGGSSR).

It belongs to the protein kinase superfamily. TKL Ser/Thr protein kinase family.

The catalysed reaction is L-seryl-[protein] + ATP = O-phospho-L-seryl-[protein] + ADP + H(+). It carries out the reaction L-threonyl-[protein] + ATP = O-phospho-L-threonyl-[protein] + ADP + H(+). The sequence is that of Probable serine/threonine-protein kinase DDB_G0276181 from Dictyostelium discoideum (Social amoeba).